A 172-amino-acid chain; its full sequence is RNA silencing suppressor p19 (172 aa).

Over residues 1–20 (MERAIQGNDAREQANSERWD) the composition is skewed to basic and acidic residues. Positions 1–38 (MERAIQGNDAREQANSERWDGGSGGTTSPFKLPDESPS) are disordered.

It belongs to the tombusviruses protein p19 family. In terms of assembly, homodimer.

Functionally, acts as a suppressor of RNA-mediated gene silencing, also known as post-transcriptional gene silencing (PTGS), a mechanism of plant viral defense that limits the accumulation of viral RNAs. Binds to short interfering RNAs (siRNAs) with high affinity. Acts as a molecular caliper to specifically select siRNAs based on the length of the duplex region of the RNA. This chain is RNA silencing suppressor p19, found in Capsicum annuum (Capsicum pepper).